Consider the following 98-residue polypeptide: Elicitin Vex1 (98 aa).

Intrachain disulfides connect C3–C71, C27–C56, and C51–C95. An N-linked (GlcNAc...) asparagine glycan is attached at N92.

This sequence belongs to the elicitin family.

Its subcellular location is the secreted. Induces local and distal defense responses (incompatible hypersensitive reaction) in plants from the solanaceae and cruciferae families. Elicits leaf necrosis and causes the accumulation of pathogenesis-related proteins. Might interact with the lipidic molecules of the plasma membrane. This Phytopythium vexans (Damping-off fungus) protein is Elicitin Vex1.